A 163-amino-acid chain; its full sequence is Ureidoglycolate lyase 2 (163 aa).

This sequence belongs to the ureidoglycolate lyase family. In terms of assembly, homodimer. It depends on Ni(2+) as a cofactor.

It carries out the reaction (S)-ureidoglycolate = urea + glyoxylate. It functions in the pathway nitrogen metabolism; (S)-allantoin degradation. Functionally, catalyzes the catabolism of the allantoin degradation intermediate (S)-ureidoglycolate, generating urea and glyoxylate. Involved in the utilization of allantoin as nitrogen source. The protein is Ureidoglycolate lyase 2 of Rhizobium meliloti (strain 1021) (Ensifer meliloti).